The chain runs to 141 residues: Large ribosomal subunit protein uL11 (141 aa).

This sequence belongs to the universal ribosomal protein uL11 family. In terms of assembly, part of the ribosomal stalk of the 50S ribosomal subunit. Interacts with L10 and the large rRNA to form the base of the stalk. L10 forms an elongated spine to which L12 dimers bind in a sequential fashion forming a multimeric L10(L12)X complex. In terms of processing, one or more lysine residues are methylated.

Forms part of the ribosomal stalk which helps the ribosome interact with GTP-bound translation factors. The polypeptide is Large ribosomal subunit protein uL11 (Streptococcus uberis (strain ATCC BAA-854 / 0140J)).